Reading from the N-terminus, the 521-residue chain is Aspartic proteinase yapsin-1 (521 aa).

A signal peptide spans 1–17 (MRIWILIFFSFIKLVSS). The Extracellular portion of the chain corresponds to 18 to 500 (LQYTGNGVLA…NAVANAGNSF (483 aa)). The region spanning 67 to 409 (YTTTLSIGRP…HQSQKMIAIG (343 aa)) is the Peptidase A1 domain. The active site involves D85. N-linked (GlcNAc...) asparagine glycosylation is found at N136, N157, N250, N289, N295, N354, N414, N418, N460, and N484. Residues 501–521 (SPLSAMVIMMMSAVFLGLGII) traverse the membrane as a helical segment.

This sequence belongs to the peptidase A1 family.

It is found in the endoplasmic reticulum membrane. The protein resides in the secreted. Its subcellular location is the cell wall. Its function is as follows. Cleaves at paired basic residues. The polypeptide is Aspartic proteinase yapsin-1 (yps1) (Schizosaccharomyces pombe (strain 972 / ATCC 24843) (Fission yeast)).